Here is a 449-residue protein sequence, read N- to C-terminus: Doublesex- and mab-3-related transcription factor A2 (449 aa).

Positions 57 to 104 form a DNA-binding region, DM; the sequence is CARCRNHGVVSALKGHKRYCRWKDCMCAKCTLIAERQRVMAAQVALRR. Residues 163-259 are disordered; sequence FPKTQLSGST…PSPSSAASRH (97 aa). Polar residues predominate over residues 166–187; sequence TQLSGSTTTQKSVGKPASTESD. The segment covering 230–240 has biased composition (low complexity); the sequence is GSVSSLGSDSG. Residues 260–295 enclose the DMA domain; that stretch reads MNAIDILTRVFPSHKRSVLELVLQGCGKDVVQAIEQ.

The protein belongs to the DMRT family. In terms of tissue distribution, expressed in brain and eye.

It is found in the nucleus. In terms of biological role, may be involved in sexual development. This Xiphophorus maculatus (Southern platyfish) protein is Doublesex- and mab-3-related transcription factor A2 (dmrta2).